Here is a 315-residue protein sequence, read N- to C-terminus: Olfactory receptor 8J2 (315 aa).

Residues 1–24 (MASGNLTWVTEFILVGVSDDPELQ) are Extracellular-facing. Residue asparagine 5 is glycosylated (N-linked (GlcNAc...) asparagine). A helical transmembrane segment spans residues 25–45 (IPLFLVFLVLYLLTVAGNLGI). The Cytoplasmic segment spans residues 46 to 57 (ITLTSVDPQLQT). A helical transmembrane segment spans residues 58–78 (PMYFFLRHLAIINLCNSTVVA). Residues 79-97 (PKMLVNFLVTKKTISYYGC) lie on the Extracellular side of the membrane. An intrachain disulfide couples cysteine 97 to cysteine 179. The chain crosses the membrane as a helical span at residues 98-118 (AAQLGGFLVFIVAEIFTLAAM). Residues 119 to 143 (AYDRYVAIWSPLLYAVVVSPKVCRL) lie on the Cytoplasmic side of the membrane. A helical membrane pass occupies residues 144-164 (LVSLTYLQSLITALTVSSCVF). At 165 to 205 (SVSYCSSNIINHFYCDDVPLLALSCSDTYIPETAVFIFSGT) the chain is on the extracellular side. A helical membrane pass occupies residues 206–226 (NLLFSMIVVLISYFNIVITIL). The Cytoplasmic portion of the chain corresponds to 227–239 (RIRSSEGRQKAFS). The helical transmembrane segment at 240–260 (TCASHMIAVVVFYGTLLFMYL) threads the bilayer. At 261 to 271 (QPRSNHSLDTD) the chain is on the extracellular side. Asparagine 265 carries N-linked (GlcNAc...) asparagine glycosylation. The chain crosses the membrane as a helical span at residues 272–292 (KMASVFYTLVIPVLNPLIYSL). The Cytoplasmic segment spans residues 293–315 (RNKNVKDALKRFLDNPCRSLKLM).

Belongs to the G-protein coupled receptor 1 family.

Its subcellular location is the membrane. Functionally, odorant receptor. The polypeptide is Olfactory receptor 8J2 (OR8J2) (Homo sapiens (Human)).